The sequence spans 28 residues: Odorant-binding protein 1 (28 aa).

The protein belongs to the calycin superfamily. Lipocalin family. In terms of tissue distribution, nasal mucosa.

It localises to the secreted. Its subcellular location is the extracellular space. This soluble protein may play a specific role in odor discrimination and perception. In Hystrix cristata (North African crested porcupine), this protein is Odorant-binding protein 1.